The primary structure comprises 61 residues: Small ribosomal subunit protein uS14 (61 aa).

Residues C24, C27, C40, and C43 each coordinate Zn(2+).

This sequence belongs to the universal ribosomal protein uS14 family. Zinc-binding uS14 subfamily. As to quaternary structure, part of the 30S ribosomal subunit. Contacts proteins S3 and S10. Requires Zn(2+) as cofactor.

Its function is as follows. Binds 16S rRNA, required for the assembly of 30S particles and may also be responsible for determining the conformation of the 16S rRNA at the A site. This Beutenbergia cavernae (strain ATCC BAA-8 / DSM 12333 / CCUG 43141 / JCM 11478 / NBRC 16432 / NCIMB 13614 / HKI 0122) protein is Small ribosomal subunit protein uS14.